Consider the following 547-residue polypeptide: Chaperonin GroEL 1 (547 aa).

Residues Thr-30–Pro-33, Lys-51, Asp-87–Thr-91, Gly-415, and Asp-495 contribute to the ATP site.

It belongs to the chaperonin (HSP60) family. In terms of assembly, forms a cylinder of 14 subunits composed of two heptameric rings stacked back-to-back. Interacts with the co-chaperonin GroES.

It is found in the cytoplasm. It carries out the reaction ATP + H2O + a folded polypeptide = ADP + phosphate + an unfolded polypeptide.. In terms of biological role, together with its co-chaperonin GroES, plays an essential role in assisting protein folding. The GroEL-GroES system forms a nano-cage that allows encapsulation of the non-native substrate proteins and provides a physical environment optimized to promote and accelerate protein folding. This Azorhizobium caulinodans (strain ATCC 43989 / DSM 5975 / JCM 20966 / LMG 6465 / NBRC 14845 / NCIMB 13405 / ORS 571) protein is Chaperonin GroEL 1.